The chain runs to 479 residues: Ribosomal RNA small subunit methyltransferase F (479 aa).

Residues 125–131 (AAAPGSK), glutamate 149, aspartate 176, and aspartate 194 each bind S-adenosyl-L-methionine. Catalysis depends on cysteine 247, which acts as the Nucleophile.

It belongs to the class I-like SAM-binding methyltransferase superfamily. RsmB/NOP family.

Its subcellular location is the cytoplasm. The enzyme catalyses cytidine(1407) in 16S rRNA + S-adenosyl-L-methionine = 5-methylcytidine(1407) in 16S rRNA + S-adenosyl-L-homocysteine + H(+). Functionally, specifically methylates the cytosine at position 1407 (m5C1407) of 16S rRNA. This is Ribosomal RNA small subunit methyltransferase F from Escherichia fergusonii (strain ATCC 35469 / DSM 13698 / CCUG 18766 / IAM 14443 / JCM 21226 / LMG 7866 / NBRC 102419 / NCTC 12128 / CDC 0568-73).